A 964-amino-acid chain; its full sequence is Siderophore exporter MmpL5 (964 aa).

12 consecutive transmembrane segments (helical) span residues 31–51 (FAVP…VTVP), 203–223 (SLQV…LLVY), 230–250 (AIML…VAFL), 255–275 (IIGL…AAAT), 302–322 (MFGG…GATF), 340–360 (AIGM…IIAV), 389–409 (WPGP…LTLP), 773–793 (TYDL…IMLI), 803–823 (VIVG…VLIW), 826–846 (ILGI…LLAV), 880–900 (VVTA…VSEL), and 923–943 (SFMT…PQVV).

It belongs to the resistance-nodulation-cell division (RND) (TC 2.A.6) family. MmpL subfamily. Interacts with MmpS5.

It is found in the cell inner membrane. Its function is as follows. Part of an export system, which is required for biosynthesis and secretion of siderophores. The polypeptide is Siderophore exporter MmpL5 (mmpL5) (Mycobacterium tuberculosis (strain CDC 1551 / Oshkosh)).